The chain runs to 1017 residues: GPI ethanolamine phosphate transferase 3 (1017 aa).

The helical transmembrane segment at 34-54 threads the bilayer; the sequence is FYIILLVFIAILQFISIAFFT. 5 N-linked (GlcNAc...) asparagine glycosylation sites follow: Asn66, Asn71, Asn100, Asn182, and Asn203. Residues 347–367 traverse the membrane as a helical segment; sequence VSSLALLMGQPIPFNNLGWPI. A glycan (N-linked (GlcNAc...) asparagine) is linked at Asn411. 6 helical membrane passes run 457-477, 484-504, 515-535, 558-578, 582-602, and 644-664; these read LLAT…SIVV, FVPG…GIFY, FWGT…ITIF, IAVM…FTIW, IVAF…VFLP, and LGGY…MITI. N-linked (GlcNAc...) asparagine glycans are attached at residues Asn681 and Asn682. Residues 685-705 traverse the membrane as a helical segment; the sequence is WWVLGLCFLMIFILPACITGY. The N-linked (GlcNAc...) asparagine glycan is linked to Asn707. Residues 715–735 form a helical membrane-spanning segment; the sequence is AAPIWINVFLKGILGLNFVYW. Asn742 carries an N-linked (GlcNAc...) asparagine glycan. The next 6 membrane-spanning stretches (helical) occupy residues 765–785, 806–826, 829–849, 903–923, 947–967, and 981–1001; these read IIAG…PLCI, NIYG…ILLF, PLAQ…LEII, IAII…VALL, GILL…VTHF, and FIFA…GTIA.

It belongs to the PIGG/PIGN/PIGO family. PIGO subfamily. Post-translationally, glycosylated.

The protein resides in the endoplasmic reticulum membrane. It functions in the pathway glycolipid biosynthesis; glycosylphosphatidylinositol-anchor biosynthesis. In terms of biological role, involved in glycosylphosphatidylinositol-anchor biosynthesis. Transfers ethanolamine phosphate to the GPI third mannose which links the GPI-anchor to the C-terminus of the proteins by an amide bond. Involved in cell wall biosynthesis. The chain is GPI ethanolamine phosphate transferase 3 (GPI13) from Saccharomyces cerevisiae (strain ATCC 204508 / S288c) (Baker's yeast).